A 145-amino-acid polypeptide reads, in one-letter code: MKIFVQKLRPNAELPLLQTKQAAGYDIHACLDSKLVLEPGNVGLVPTGLSFAIPQEFHFEIRPRSGFSTKNRILIPNSPGTIDSDYRGELMIPLLNLGDSSFIIEHGMRIAQLLIRKTWYADWELVSEFADRTERGANGFGSTGH.

Residues 64-66 (RSG), Asn-77, 81-83 (TID), and Met-91 contribute to the substrate site.

This sequence belongs to the dUTPase family. Mg(2+) is required as a cofactor.

It carries out the reaction dUTP + H2O = dUMP + diphosphate + H(+). Its pathway is pyrimidine metabolism; dUMP biosynthesis; dUMP from dCTP (dUTP route): step 2/2. Its function is as follows. This enzyme is involved in nucleotide metabolism: it produces dUMP, the immediate precursor of thymidine nucleotides and it decreases the intracellular concentration of dUTP so that uracil cannot be incorporated into DNA. The chain is Deoxyuridine 5'-triphosphate nucleotidohydrolase from Leptospira interrogans serogroup Icterohaemorrhagiae serovar copenhageni (strain Fiocruz L1-130).